Here is a 276-residue protein sequence, read N- to C-terminus: Chlorophyll a-b binding protein CP29.3, chloroplastic (276 aa).

Residues 1 to 29 (MATTTAAAASGIFGIRIQDPRPGTGRVQA) constitute a chloroplast transit peptide. The interval 1–53 (MATTTAAAASGIFGIRIQDPRPGTGRVQARFGFSFGKKKPAPPPKKSRQVQDD) is disordered. Basic residues predominate over residues 36–48 (GKKKPAPPPKKSR). Trp59 is a chlorophyll b binding site. Chlorophyll a-binding residues include Phe79, Glu141, and His144. Residues 147–167 (WAMLGTLGAIAVEALTGIAWQ) traverse the membrane as a helical segment. Leu181 provides a ligand contact to chlorophyll a. Residues 185-205 (LPFSLTTLIWIEVLVVGYIEF) form a helical membrane-spanning segment. 2 residues coordinate chlorophyll b: Glu204 and Arg207. Chlorophyll a-binding residues include Glu242, His245, Arg247, and Gln259. A helical transmembrane segment spans residues 248–268 (LAMVAFLIFALQAAFTGKGPV).

The protein belongs to the light-harvesting chlorophyll a/b-binding (LHC) protein family. The LHC complex consists of chlorophyll a-b binding proteins. Binds at least 14 chlorophylls (8 Chl-a and 6 Chl-b) and carotenoids such as lutein and neoxanthin. serves as cofactor. In terms of processing, photoregulated by reversible phosphorylation of its threonine residues.

The protein localises to the plastid. The protein resides in the chloroplast thylakoid membrane. In terms of biological role, the light-harvesting complex (LHC) functions as a light receptor, it captures and delivers excitation energy to photosystems with which it is closely associated. In Arabidopsis thaliana (Mouse-ear cress), this protein is Chlorophyll a-b binding protein CP29.3, chloroplastic (LHCB4.3).